The primary structure comprises 1051 residues: Inactive tyrosine-protein kinase 7 (1051 aa).

An N-terminal signal peptide occupies residues 1–22 (MAALRALLLLLAVGAQAAIRFA). Ig-like C2-type domains lie at 23–105 (KEPY…ANAS), 115–204 (SVVL…DNFT), 213–298 (PQAV…KATL), 308–388 (PFSP…LSIT), 393–472 (PKWV…GSIE), 487–566 (PPPQ…ATVQ), and 573–661 (VTFK…AFLY). Residues 23-685 (KEPYSQDALH…SHTPYKMIQT (663 aa)) are Extracellular-facing. Cysteines 40 and 88 form a disulfide. The N-linked (GlcNAc...) asparagine glycan is linked to Asn103. A disulfide bridge links Cys137 with Cys187. N-linked (GlcNAc...) asparagine glycans are attached at residues Asn202, Asn255, and Asn264. 5 disulfide bridges follow: Cys234–Cys282, Cys326–Cys372, Cys414–Cys462, Cys505–Cys551, and Cys594–Cys645. Residues Asn444, Asn548, and Asn627 are each glycosylated (N-linked (GlcNAc...) asparagine). The helical transmembrane segment at 686–706 (IGLSVGAAVAYIIIVLGLMFY) threads the bilayer. Over 707-1051 (CKKRRKAKRL…LGDSPADSKA (345 aa)) the chain is Cytoplasmic. A Protein kinase; inactive domain is found at 777–1048 (LQTITTLGRG…AAALGDSPAD (272 aa)).

The protein belongs to the protein kinase superfamily. Tyr protein kinase family. Insulin receptor subfamily. As to expression, expressed in bone marrow, spleen, bursa, thymus and brain. Weakly expressed in fibroblasts. Also expressed in embryonic liver.

It is found in the membrane. Functionally, inactive tyrosine kinase involved in Wnt signaling. pathway. The chain is Inactive tyrosine-protein kinase 7 (PTK7) from Gallus gallus (Chicken).